Here is a 485-residue protein sequence, read N- to C-terminus: Arginine biosynthesis bifunctional protein ArgJ, mitochondrial (485 aa).

Residues Thr185, Lys214, Thr225, and Glu315 each coordinate substrate. The active-site Nucleophile is Thr225.

The protein belongs to the ArgJ family. In terms of assembly, heterodimer of an alpha and a beta chain. In terms of processing, the alpha and beta chains are autoproteolytically processed from a single precursor protein within the mitochondrion.

The protein resides in the mitochondrion matrix. It carries out the reaction N(2)-acetyl-L-ornithine + L-glutamate = N-acetyl-L-glutamate + L-ornithine. The enzyme catalyses L-glutamate + acetyl-CoA = N-acetyl-L-glutamate + CoA + H(+). Its pathway is amino-acid biosynthesis; L-arginine biosynthesis; L-ornithine and N-acetyl-L-glutamate from L-glutamate and N(2)-acetyl-L-ornithine (cyclic): step 1/1. It participates in amino-acid biosynthesis; L-arginine biosynthesis; N(2)-acetyl-L-ornithine from L-glutamate: step 1/4. In terms of biological role, catalyzes two activities which are involved in the cyclic version of arginine biosynthesis: the synthesis of acetylglutamate from glutamate and acetyl-CoA, and of ornithine by transacetylation between acetylornithine and glutamate. This chain is Arginine biosynthesis bifunctional protein ArgJ, mitochondrial, found in Penicillium rubens (strain ATCC 28089 / DSM 1075 / NRRL 1951 / Wisconsin 54-1255) (Penicillium chrysogenum).